Consider the following 183-residue polypeptide: Ribosome-recycling factor (183 aa).

It belongs to the RRF family.

Its subcellular location is the cytoplasm. Its function is as follows. Responsible for the release of ribosomes from messenger RNA at the termination of protein biosynthesis. May increase the efficiency of translation by recycling ribosomes from one round of translation to another. The protein is Ribosome-recycling factor of Treponema pallidum (strain Nichols).